Reading from the N-terminus, the 416-residue chain is Methylthioribose-1-phosphate isomerase (416 aa).

Catalysis depends on Asp280, which acts as the Proton donor.

This sequence belongs to the eIF-2B alpha/beta/delta subunits family. MtnA subfamily.

The protein resides in the cytoplasm. It localises to the nucleus. It catalyses the reaction 5-(methylsulfanyl)-alpha-D-ribose 1-phosphate = 5-(methylsulfanyl)-D-ribulose 1-phosphate. It participates in amino-acid biosynthesis; L-methionine biosynthesis via salvage pathway; L-methionine from S-methyl-5-thio-alpha-D-ribose 1-phosphate: step 1/6. Catalyzes the interconversion of methylthioribose-1-phosphate (MTR-1-P) into methylthioribulose-1-phosphate (MTRu-1-P). The protein is Methylthioribose-1-phosphate isomerase of Candida albicans (strain SC5314 / ATCC MYA-2876) (Yeast).